The primary structure comprises 597 residues: Aspartate--tRNA(Asp/Asn) ligase (597 aa).

E175 lines the L-aspartate pocket. The interval 199–202 (QQYK) is aspartate. L-aspartate is bound by residues R221 and H454. 221-223 (RDE) lines the ATP pocket. ATP is bound at residue E488. R495 lines the L-aspartate pocket. 540–543 (GVDR) is a binding site for ATP.

The protein belongs to the class-II aminoacyl-tRNA synthetase family. Type 1 subfamily. Homodimer.

It localises to the cytoplasm. The enzyme catalyses tRNA(Asx) + L-aspartate + ATP = L-aspartyl-tRNA(Asx) + AMP + diphosphate. Aspartyl-tRNA synthetase with relaxed tRNA specificity since it is able to aspartylate not only its cognate tRNA(Asp) but also tRNA(Asn). Reaction proceeds in two steps: L-aspartate is first activated by ATP to form Asp-AMP and then transferred to the acceptor end of tRNA(Asp/Asn). The polypeptide is Aspartate--tRNA(Asp/Asn) ligase (Bartonella quintana (strain Toulouse) (Rochalimaea quintana)).